Here is a 293-residue protein sequence, read N- to C-terminus: NAD kinase (293 aa).

D74 serves as the catalytic Proton acceptor. Residues 74 to 75 (DG), 148 to 149 (NE), H159, R176, D178, T186, 189 to 194 (TAYSLS), and Q248 each bind NAD(+).

Belongs to the NAD kinase family. In terms of assembly, homodimer. A divalent metal cation is required as a cofactor.

The protein resides in the cytoplasm. The catalysed reaction is NAD(+) + ATP = ADP + NADP(+) + H(+). Involved in the regulation of the intracellular balance of NAD and NADP, and is a key enzyme in the biosynthesis of NADP. Catalyzes specifically the phosphorylation on 2'-hydroxyl of the adenosine moiety of NAD to yield NADP. The polypeptide is NAD kinase (Yersinia pestis).